A 1124-amino-acid chain; its full sequence is Tyrosine-protein kinase JAK3 (1124 aa).

Positions M1–R223 are interaction with cytokine/interferon/growth hormone receptors. S17 is subject to Phosphoserine. An FERM domain is found at G24–Q356. The region spanning Q375–C475 is the SH2; atypical domain. In terms of domain architecture, Protein kinase 1 spans L521–I781. Y785 is modified (phosphotyrosine; by autocatalysis). The Protein kinase 2 domain occupies L822 to T1111. Residues L828–V836 and K855 each bind ATP. Phosphotyrosine is present on residues Y904 and Y939. D949 serves as the catalytic Proton acceptor. Phosphotyrosine; by autocatalysis occurs at positions 980 and 981.

It belongs to the protein kinase superfamily. Tyr protein kinase family. JAK subfamily. As to quaternary structure, interacts with STAM2 and MYO18A. Interacts with SHB. Interacts with CD69. In terms of processing, tyrosine phosphorylated in response to IL-2 and IL-4. Dephosphorylation of Tyr-980 and Tyr-981 by PTPN2 negatively regulates cytokine-mediated signaling. In NK cells and an NK-like cell line but not in resting T-cells or in other tissues. The S-form is more commonly seen in hematopoietic lines, whereas the B-form is detected in cells both of hematopoietic and epithelial origins.

The protein localises to the endomembrane system. Its subcellular location is the cytoplasm. It catalyses the reaction L-tyrosyl-[protein] + ATP = O-phospho-L-tyrosyl-[protein] + ADP + H(+). Its function is as follows. Non-receptor tyrosine kinase involved in various processes such as cell growth, development, or differentiation. Mediates essential signaling events in both innate and adaptive immunity and plays a crucial role in hematopoiesis during T-cells development. In the cytoplasm, plays a pivotal role in signal transduction via its association with type I receptors sharing the common subunit gamma such as IL2R, IL4R, IL7R, IL9R, IL15R and IL21R. Following ligand binding to cell surface receptors, phosphorylates specific tyrosine residues on the cytoplasmic tails of the receptor, creating docking sites for STATs proteins. Subsequently, phosphorylates the STATs proteins once they are recruited to the receptor. Phosphorylated STATs then form homodimer or heterodimers and translocate to the nucleus to activate gene transcription. For example, upon IL2R activation by IL2, JAK1 and JAK3 molecules bind to IL2R beta (IL2RB) and gamma chain (IL2RG) subunits inducing the tyrosine phosphorylation of both receptor subunits on their cytoplasmic domain. Then, STAT5A and STAT5B are recruited, phosphorylated and activated by JAK1 and JAK3. Once activated, dimerized STAT5 translocates to the nucleus and promotes the transcription of specific target genes in a cytokine-specific fashion. This chain is Tyrosine-protein kinase JAK3, found in Homo sapiens (Human).